A 374-amino-acid chain; its full sequence is RNA polymerase sigma factor SigA (374 aa).

The interval 141-211 (LAEANLRLVV…TRAIADQART (71 aa)) is sigma-70 factor domain-2. An Interaction with polymerase core subunit RpoC motif is present at residues 165 to 168 (DLIQ). Positions 220-296 (ETINKLIRVQ…DQDATSPSDH (77 aa)) are sigma-70 factor domain-3. The tract at residues 309–362 (VLDTLTDREENVLRLRFGLDDGRTRTLEEVGRVFGVTRERIRQIEAKALRKLRH) is sigma-70 factor domain-4. The segment at residues 335–354 (LEEVGRVFGVTRERIRQIEA) is a DNA-binding region (H-T-H motif).

It belongs to the sigma-70 factor family. RpoD/SigA subfamily. In terms of assembly, interacts transiently with the RNA polymerase catalytic core.

Its subcellular location is the cytoplasm. Functionally, sigma factors are initiation factors that promote the attachment of RNA polymerase to specific initiation sites and are then released. This sigma factor is the primary sigma factor during exponential growth. In Listeria innocua serovar 6a (strain ATCC BAA-680 / CLIP 11262), this protein is RNA polymerase sigma factor SigA.